Consider the following 136-residue polypeptide: Histone H3, embryonic (136 aa).

The tract at residues 1–43 is disordered; sequence MARTKQTARKSTGGKAPRKQLATKAARKSAPATGGVKKPHRYR. Residue lysine 5 is modified to N6-methylated lysine. The residue at position 10 (lysine 10) is an N6-acetyllysine; alternate. Position 10 is an N6-methylated lysine; alternate (lysine 10). Serine 11 carries the phosphoserine modification. An N6-acetyllysine mark is found at lysine 15 and lysine 24. N6-methylated lysine occurs at positions 28, 37, and 80.

Belongs to the histone H3 family. As to quaternary structure, the nucleosome is a histone octamer containing two molecules each of H2A, H2B, H3 and H4 assembled in one H3-H4 heterotetramer and two H2A-H2B heterodimers. The octamer wraps approximately 147 bp of DNA. In terms of processing, acetylation is generally linked to gene activation. Post-translationally, methylation at Lys-5 is linked to gene activation. Methylation at Lys-10 is linked to gene repression.

Its subcellular location is the nucleus. It localises to the chromosome. Functionally, core component of nucleosome. Nucleosomes wrap and compact DNA into chromatin, limiting DNA accessibility to the cellular machineries which require DNA as a template. Histones thereby play a central role in transcription regulation, DNA repair, DNA replication and chromosomal stability. DNA accessibility is regulated via a complex set of post-translational modifications of histones, also called histone code, and nucleosome remodeling. This chain is Histone H3, embryonic, found in Strongylocentrotus purpuratus (Purple sea urchin).